Consider the following 495-residue polypeptide: ATP synthase subunit beta, chloroplastic (495 aa).

172–179 (GGAGVGKT) is an ATP binding site.

It belongs to the ATPase alpha/beta chains family. As to quaternary structure, F-type ATPases have 2 components, CF(1) - the catalytic core - and CF(0) - the membrane proton channel. CF(1) has five subunits: alpha(3), beta(3), gamma(1), delta(1), epsilon(1). CF(0) has four main subunits: a(1), b(1), b'(1) and c(9-12).

The protein resides in the plastid. Its subcellular location is the chloroplast thylakoid membrane. The enzyme catalyses ATP + H2O + 4 H(+)(in) = ADP + phosphate + 5 H(+)(out). In terms of biological role, produces ATP from ADP in the presence of a proton gradient across the membrane. The catalytic sites are hosted primarily by the beta subunits. The chain is ATP synthase subunit beta, chloroplastic from Hyacinthus orientalis (Common hyacinth).